A 485-amino-acid polypeptide reads, in one-letter code: GTPase Obg (485 aa).

Residues 2 to 159 (PRFVDRVVIH…RDLTLELKTV (158 aa)) form the Obg domain. Positions 160-341 (ADVGLIGFPS…LIFALWEMVK (182 aa)) constitute an OBG-type G domain. GTP contacts are provided by residues 166–173 (GFPSAGKS), 191–195 (FTTLV), 212–215 (DVPG), 292–295 (NKID), and 322–324 (STV). Mg(2+) contacts are provided by S173 and T193. Residues 359-437 (PIPVDESGFT…IGDVTFDWEP (79 aa)) form the OCT domain. The disordered stretch occupies residues 450-485 (RGTDIRLEQTDRVGAAERKAARRERRQPGESGGEDS). Residues 452 to 468 (TDIRLEQTDRVGAAERK) are compositionally biased toward basic and acidic residues.

It belongs to the TRAFAC class OBG-HflX-like GTPase superfamily. OBG GTPase family. In terms of assembly, monomer. Mg(2+) serves as cofactor.

It localises to the cytoplasm. Its function is as follows. An essential GTPase which binds GTP, GDP and possibly (p)ppGpp with moderate affinity, with high nucleotide exchange rates and a fairly low GTP hydrolysis rate. Plays a role in control of the cell cycle, stress response, ribosome biogenesis and in those bacteria that undergo differentiation, in morphogenesis control. In Mycolicibacterium smegmatis (strain ATCC 700084 / mc(2)155) (Mycobacterium smegmatis), this protein is GTPase Obg.